The sequence spans 438 residues: Gamma-glutamyl phosphate reductase (438 aa).

This sequence belongs to the gamma-glutamyl phosphate reductase family.

It is found in the cytoplasm. The catalysed reaction is L-glutamate 5-semialdehyde + phosphate + NADP(+) = L-glutamyl 5-phosphate + NADPH + H(+). Its pathway is amino-acid biosynthesis; L-proline biosynthesis; L-glutamate 5-semialdehyde from L-glutamate: step 2/2. Its function is as follows. Catalyzes the NADPH-dependent reduction of L-glutamate 5-phosphate into L-glutamate 5-semialdehyde and phosphate. The product spontaneously undergoes cyclization to form 1-pyrroline-5-carboxylate. In Prochlorococcus marinus (strain MIT 9303), this protein is Gamma-glutamyl phosphate reductase.